A 296-amino-acid polypeptide reads, in one-letter code: Elongation factor Ts (296 aa).

An involved in Mg(2+) ion dislocation from EF-Tu region spans residues 79–82; that stretch reads TDFV.

This sequence belongs to the EF-Ts family.

The protein localises to the cytoplasm. Associates with the EF-Tu.GDP complex and induces the exchange of GDP to GTP. It remains bound to the aminoacyl-tRNA.EF-Tu.GTP complex up to the GTP hydrolysis stage on the ribosome. In Acholeplasma laidlawii (strain PG-8A), this protein is Elongation factor Ts.